The primary structure comprises 677 residues: Methionine--tRNA ligase (677 aa).

The 'HIGH' region signature appears at 15–25 (PYANGPIHIGH). Cys146, Cys149, Cys159, and Cys162 together coordinate Zn(2+). The short motif at 332–336 (KMSKS) is the 'KMSKS' region element. Lys335 contacts ATP. In terms of domain architecture, tRNA-binding spans 576–677 (DFAKVDLRVA…DGAKPGMRIM (102 aa)).

It belongs to the class-I aminoacyl-tRNA synthetase family. MetG type 1 subfamily. As to quaternary structure, homodimer. Requires Zn(2+) as cofactor.

The protein localises to the cytoplasm. The enzyme catalyses tRNA(Met) + L-methionine + ATP = L-methionyl-tRNA(Met) + AMP + diphosphate. Functionally, is required not only for elongation of protein synthesis but also for the initiation of all mRNA translation through initiator tRNA(fMet) aminoacylation. This is Methionine--tRNA ligase from Idiomarina loihiensis (strain ATCC BAA-735 / DSM 15497 / L2-TR).